Consider the following 662-residue polypeptide: p-hydroxybenzoic acid efflux pump subunit AaeB (662 aa).

11 helical membrane-spanning segments follow: residues 22-42 (FAFKLSFAIVLSLFLGFHLQL), 52-72 (AAIVAAGPAFAAGGEPFSGAI), 76-96 (GMLRVVGTFIGCIGALIIIIA), 102-122 (VVMLMLCCIWAGLCTWVSSLV), 129-149 (VFGLAGYTTLIIIVSTQGTPL), 161-181 (EIVLGIVCAILADLLFSPRSI), 378-398 (LFWLSTGWTSGSVCMVMIAVV), 415-435 (FLFGTIYALPLGALMFMFIMP), 439-459 (QSMLLLCLSLGAMAFFLGLEV), 467-487 (LGALASTINILVLDNPMTFHI), and 491-511 (LDSAIGQIIGCFLALMVILLI).

Belongs to the aromatic acid exporter ArAE (TC 2.A.85) family.

The protein resides in the cell inner membrane. Its function is as follows. Forms an efflux pump with AaeA. Could function as a metabolic relief valve, allowing to eliminate certain compounds when they accumulate to high levels in the cell. The protein is p-hydroxybenzoic acid efflux pump subunit AaeB of Pectobacterium carotovorum subsp. carotovorum (strain PC1).